A 253-amino-acid polypeptide reads, in one-letter code: 3-dehydroquinate dehydratase (253 aa).

3-dehydroquinate contacts are provided by residues 46–48 and Arg-82; that span reads EFR. His-143 (proton donor/acceptor) is an active-site residue. The Schiff-base intermediate with substrate role is filled by Lys-170. 3-dehydroquinate-binding residues include Arg-213, Ser-232, and Gln-236.

This sequence belongs to the type-I 3-dehydroquinase family. Homodimer.

The enzyme catalyses 3-dehydroquinate = 3-dehydroshikimate + H2O. It participates in metabolic intermediate biosynthesis; chorismate biosynthesis; chorismate from D-erythrose 4-phosphate and phosphoenolpyruvate: step 3/7. In terms of biological role, involved in the third step of the chorismate pathway, which leads to the biosynthesis of aromatic amino acids. Catalyzes the cis-dehydration of 3-dehydroquinate (DHQ) and introduces the first double bond of the aromatic ring to yield 3-dehydroshikimate. The protein is 3-dehydroquinate dehydratase of Clostridium novyi (strain NT).